The primary structure comprises 399 residues: S-adenosylmethionine synthase (399 aa).

An ATP-binding site is contributed by histidine 17. Aspartate 19 is a Mg(2+) binding site. Glutamate 45 contributes to the K(+) binding site. Glutamate 58 and glutamine 101 together coordinate L-methionine. Positions 101–111 (QSADIAMGVDQ) are flexible loop. Residues 177–179 (DGK), 244–245 (RF), aspartate 253, 259–260 (RK), alanine 276, and lysine 280 contribute to the ATP site. Residue aspartate 253 coordinates L-methionine. Lysine 284 provides a ligand contact to L-methionine.

Belongs to the AdoMet synthase family. As to quaternary structure, homotetramer; dimer of dimers. It depends on Mg(2+) as a cofactor. K(+) serves as cofactor.

The protein localises to the cytoplasm. It carries out the reaction L-methionine + ATP + H2O = S-adenosyl-L-methionine + phosphate + diphosphate. It functions in the pathway amino-acid biosynthesis; S-adenosyl-L-methionine biosynthesis; S-adenosyl-L-methionine from L-methionine: step 1/1. Its function is as follows. Catalyzes the formation of S-adenosylmethionine (AdoMet) from methionine and ATP. The overall synthetic reaction is composed of two sequential steps, AdoMet formation and the subsequent tripolyphosphate hydrolysis which occurs prior to release of AdoMet from the enzyme. The sequence is that of S-adenosylmethionine synthase from Bacillus thuringiensis subsp. konkukian (strain 97-27).